Reading from the N-terminus, the 540-residue chain is Chaperonin GroEL 2 (540 aa).

Residues Thr29–Pro32, Lys50, Asp86–Thr90, Gly414, and Asp496 contribute to the ATP site.

It belongs to the chaperonin (HSP60) family. In terms of assembly, forms a cylinder of 14 subunits composed of two heptameric rings stacked back-to-back. Interacts with the co-chaperonin GroES.

The protein localises to the cytoplasm. It catalyses the reaction ATP + H2O + a folded polypeptide = ADP + phosphate + an unfolded polypeptide.. In terms of biological role, together with its co-chaperonin GroES, plays an essential role in assisting protein folding. The GroEL-GroES system forms a nano-cage that allows encapsulation of the non-native substrate proteins and provides a physical environment optimized to promote and accelerate protein folding. The polypeptide is Chaperonin GroEL 2 (Rhodopirellula baltica (strain DSM 10527 / NCIMB 13988 / SH1)).